A 309-amino-acid polypeptide reads, in one-letter code: Taste receptor type 2 member 46 (309 aa).

Residue M1 is a topological domain, extracellular. Residues 2–22 form a helical membrane-spanning segment; that stretch reads ITFLPIIFSILIVVTFVIGNF. The Cytoplasmic portion of the chain corresponds to 23-46; the sequence is ANGFIALANSIEWFKRQKISFADQ. Residues 47–67 traverse the membrane as a helical segment; the sequence is ILTALAVSRVGLLWVLLLNWY. Topologically, residues 68–86 are extracellular; that stretch reads ATELNPAFYSIEVRITAYN. The helical transmembrane segment at 87 to 107 threads the bilayer; the sequence is LWAVINHFSNWLATSLSIFYL. Over 108 to 126 the chain is Cytoplasmic; sequence LKIANFSNLIFLCLKRRVK. A helical membrane pass occupies residues 127-147; the sequence is SVVLVILLGPLLFLVCHLFVI. The Extracellular portion of the chain corresponds to 148–178; it reads NMNQIIWTKEYEGNMTWKIKLRSAMYLSNTT. 2 N-linked (GlcNAc...) asparagine glycosylation sites follow: N161 and N176. The helical transmembrane segment at 179–199 threads the bilayer; sequence VTILANLVPFTLTLISFLLLI. Over 200–229 the chain is Cytoplasmic; it reads CSLCKHLEKMQLHGKGSQDPSMKVHIKALQ. A helical transmembrane segment spans residues 230–250; that stretch reads TVTSFLLLCAIYFLSIIMSVW. At 251 to 259 the chain is on the extracellular side; sequence SFESLENKP. A helical transmembrane segment spans residues 260–280; sequence VFMFCEAITFSYPSTHPFILI. Topologically, residues 281-309 are cytoplasmic; sequence WGNKKLKQTFLSVLWHVRYWVKGEKPSXP.

This sequence belongs to the G-protein coupled receptor T2R family.

The protein localises to the membrane. Its subcellular location is the cell projection. It localises to the cilium membrane. In terms of biological role, receptor that may play a role in the perception of bitterness and is gustducin-linked. May play a role in sensing the chemical composition of the gastrointestinal content. The activity of this receptor may stimulate alpha gustducin, mediate PLC-beta-2 activation and lead to the gating of TRPM5. In airway epithelial cells, binding of bitter compounds increases the intracellular calcium ion concentration and stimulates ciliary beat frequency. This chain is Taste receptor type 2 member 46 (TAS2R46), found in Pan troglodytes (Chimpanzee).